The sequence spans 253 residues: 3-deoxy-manno-octulosonate cytidylyltransferase (253 aa).

This sequence belongs to the KdsB family.

Its subcellular location is the cytoplasm. The enzyme catalyses 3-deoxy-alpha-D-manno-oct-2-ulosonate + CTP = CMP-3-deoxy-beta-D-manno-octulosonate + diphosphate. The protein operates within nucleotide-sugar biosynthesis; CMP-3-deoxy-D-manno-octulosonate biosynthesis; CMP-3-deoxy-D-manno-octulosonate from 3-deoxy-D-manno-octulosonate and CTP: step 1/1. It functions in the pathway bacterial outer membrane biogenesis; lipopolysaccharide biosynthesis. In terms of biological role, activates KDO (a required 8-carbon sugar) for incorporation into bacterial lipopolysaccharide in Gram-negative bacteria. This Pseudoalteromonas translucida (strain TAC 125) protein is 3-deoxy-manno-octulosonate cytidylyltransferase.